The chain runs to 139 residues: D-ribose pyranase (139 aa).

Catalysis depends on His-20, which acts as the Proton donor. Substrate contacts are provided by residues Asp-28, His-106, and 128–130 (YAN).

It belongs to the RbsD / FucU family. RbsD subfamily. As to quaternary structure, homodecamer.

It is found in the cytoplasm. The catalysed reaction is beta-D-ribopyranose = beta-D-ribofuranose. The protein operates within carbohydrate metabolism; D-ribose degradation; D-ribose 5-phosphate from beta-D-ribopyranose: step 1/2. In terms of biological role, catalyzes the interconversion of beta-pyran and beta-furan forms of D-ribose. The chain is D-ribose pyranase from Pectobacterium carotovorum subsp. carotovorum (strain PC1).